Consider the following 158-residue polypeptide: Phosphopantetheine adenylyltransferase (158 aa).

Threonine 10 serves as a coordination point for substrate. ATP is bound by residues threonine 10–phenylalanine 11 and histidine 18. Substrate contacts are provided by lysine 42, leucine 74, and arginine 88. ATP-binding positions include glycine 89–arginine 91, glutamate 99, and asparagine 124–threonine 130.

This sequence belongs to the bacterial CoaD family. Homohexamer. Mg(2+) serves as cofactor.

Its subcellular location is the cytoplasm. The enzyme catalyses (R)-4'-phosphopantetheine + ATP + H(+) = 3'-dephospho-CoA + diphosphate. It functions in the pathway cofactor biosynthesis; coenzyme A biosynthesis; CoA from (R)-pantothenate: step 4/5. Its function is as follows. Reversibly transfers an adenylyl group from ATP to 4'-phosphopantetheine, yielding dephospho-CoA (dPCoA) and pyrophosphate. This chain is Phosphopantetheine adenylyltransferase, found in Shewanella loihica (strain ATCC BAA-1088 / PV-4).